A 281-amino-acid polypeptide reads, in one-letter code: Phosphonates import ATP-binding protein PhnC (281 aa).

Positions 2-245 constitute an ABC transporter domain; the sequence is FELKDVTRRF…AVKEIYGTDK (244 aa). 34-41 is an ATP binding site; it reads GRSGAGKS.

The protein belongs to the ABC transporter superfamily. Phosphonates importer (TC 3.A.1.9.1) family. As to quaternary structure, the complex is composed of two ATP-binding proteins (PhnC), two transmembrane proteins (PhnE) and a solute-binding protein (PhnD).

Its subcellular location is the cell inner membrane. The catalysed reaction is phosphonate(out) + ATP + H2O = phosphonate(in) + ADP + phosphate + H(+). Part of the ABC transporter complex PhnCDE involved in phosphonates import. Responsible for energy coupling to the transport system. The sequence is that of Phosphonates import ATP-binding protein PhnC from Rhizobium etli (strain ATCC 51251 / DSM 11541 / JCM 21823 / NBRC 15573 / CFN 42).